Consider the following 427-residue polypeptide: GTPase Obg (427 aa).

An Obg domain is found at 1 to 158; that stretch reads MFIDKAKIHL…LTVTLELKLI (158 aa). The region spanning 159 to 330 is the OBG-type G domain; that stretch reads ADVGLVGFPN…LLDYVSIKLK (172 aa). GTP contacts are provided by residues 165–172, 190–194, 212–215, 282–285, and 311–313; these read GFPNVGKS, FTTLT, DIPG, NKTD, and SAA. Positions 172 and 192 each coordinate Mg(2+). Residues 347-427 enclose the OCT domain; it reads LYELKEKDTN…IYDVEFEYFH (81 aa).

This sequence belongs to the TRAFAC class OBG-HflX-like GTPase superfamily. OBG GTPase family. As to quaternary structure, monomer. Requires Mg(2+) as cofactor.

Its subcellular location is the cytoplasm. In terms of biological role, an essential GTPase which binds GTP, GDP and possibly (p)ppGpp with moderate affinity, with high nucleotide exchange rates and a fairly low GTP hydrolysis rate. Plays a role in control of the cell cycle, stress response, ribosome biogenesis and in those bacteria that undergo differentiation, in morphogenesis control. The protein is GTPase Obg of Alkaliphilus metalliredigens (strain QYMF).